A 352-amino-acid polypeptide reads, in one-letter code: Histidinol-phosphate aminotransferase (352 aa).

K216 bears the N6-(pyridoxal phosphate)lysine mark.

Belongs to the class-II pyridoxal-phosphate-dependent aminotransferase family. Histidinol-phosphate aminotransferase subfamily. The cofactor is pyridoxal 5'-phosphate.

The enzyme catalyses L-histidinol phosphate + 2-oxoglutarate = 3-(imidazol-4-yl)-2-oxopropyl phosphate + L-glutamate. It participates in amino-acid biosynthesis; L-histidine biosynthesis; L-histidine from 5-phospho-alpha-D-ribose 1-diphosphate: step 7/9. The protein is Histidinol-phosphate aminotransferase of Methanoculleus marisnigri (strain ATCC 35101 / DSM 1498 / JR1).